The chain runs to 81 residues: Fungal defensin micasin (81 aa).

An N-terminal signal peptide occupies residues Met-1–Ala-21. Positions Ala-22–Arg-43 are excised as a propeptide. Cystine bridges form between Cys-47–Cys-68, Cys-54–Cys-76, and Cys-58–Cys-78.

This sequence belongs to the invertebrate defensin family.

It localises to the secreted. Its function is as follows. Antibacterial peptide with potent activity against both Gram-positive and Gram-negative bacteria. May kill bacteria via an intracellular action mode to affect protein folding. Does not show effects on tested filamentous fungi or on the yeast S.cerevisiae. Does not act by destroying the membrane integrity, which is consistent with its nonamphiphilic architecture. Acts more rapidly than vancomycin, suggesting it does not act by inhibiting cell-wall biosynthesis. Does not cause hemolysis and has no cytotoxic effect on HEK cells. In vivo, is as efficient as vancomycin to protect mouse peritonitis models from S.aureus and P.aeruginosa infections. The polypeptide is Fungal defensin micasin (Arthroderma otae (Microsporum canis)).